The following is a 508-amino-acid chain: MASPALEELVLNSRHRLVRGLKQQKASADQIEEEVAKLLKLKAQLGHDESKQKFVLKTPKGTRDYSPRQMAVREKVFDVIICCFKRHGAEVIDTPVFELKETLMGKYGQDCKLIYDLKDQGGELLSLRYDLTVPFGRYLAMNNLTNIKRYHIAKVYRRDNPAMTRGRYLNSITVDFDIAGQFDPMIPDAECLKIMCEILSSLQIGKFLVKVNDRRILDGMFAVCGVPDSKFRTICSSVDKLDKVSWEEVKNEMVGEKGLAPEVADRIGDYVQQHGEVCLVEQLLQDPKLSQNKQAVEGLGDLKLLFEYLTLFGIDDKISFDLSLARGLDYYTGVIYVAVLLQMPTGAGEEPWCGQCGCWRRYDGLVGMFDPKGRKVPCVGLSIGVERIFSIVEQRLEALEEKVRTTETQVLVASAQKKLAGGETKACLQLWDAGIKAELLYKKNPKLLNQLQYCEETGIPLVAIIGEQELKDGVIKLRSVASREEVDVRREDLVEEIRRRTNQPLYVC.

Residues 3-59 (SPALEELVLNSRHRLVRGLKQQKASADQIEEEVAKLLKLKAQLGHDESKQKFVLKTP) enclose the WHEP-TRS domain. Phosphoserine is present on Ser-66. L-histidine is bound by residues 130–132 (DLT), Arg-157, Asp-177, Arg-326, and 330–331 (YY).

It belongs to the class-II aminoacyl-tRNA synthetase family. As to quaternary structure, homodimer.

The protein resides in the cytoplasm. The catalysed reaction is tRNA(His) + L-histidine + ATP = L-histidyl-tRNA(His) + AMP + diphosphate + H(+). Its function is as follows. Catalyzes the ATP-dependent ligation of histidine to the 3'-end of its cognate tRNA, via the formation of an aminoacyl-adenylate intermediate (His-AMP). Plays a role in axon guidance. This is Histidine--tRNA ligase, cytoplasmic (HARS1) from Mesocricetus auratus (Golden hamster).